The following is a 712-amino-acid chain: Polyribonucleotide nucleotidyltransferase (712 aa).

Aspartate 488 and aspartate 494 together coordinate Mg(2+). Residues 555 to 614 (PKIETINIPTDKIREVIGSGGKVIREIVATTGAKVDINDDGVVKVSASDGAKIKAAIDWI) form the KH domain. Residues 624 to 692 (GKIYDGKVVK…DRGKTKLSMK (69 aa)) form the S1 motif domain.

Belongs to the polyribonucleotide nucleotidyltransferase family. The cofactor is Mg(2+).

Its subcellular location is the cytoplasm. It catalyses the reaction RNA(n+1) + phosphate = RNA(n) + a ribonucleoside 5'-diphosphate. Involved in mRNA degradation. Catalyzes the phosphorolysis of single-stranded polyribonucleotides processively in the 3'- to 5'-direction. This chain is Polyribonucleotide nucleotidyltransferase, found in Caulobacter vibrioides (strain NA1000 / CB15N) (Caulobacter crescentus).